The following is a 445-amino-acid chain: Exodeoxyribonuclease 7 large subunit (445 aa).

It belongs to the XseA family. In terms of assembly, heterooligomer composed of large and small subunits.

Its subcellular location is the cytoplasm. The enzyme catalyses Exonucleolytic cleavage in either 5'- to 3'- or 3'- to 5'-direction to yield nucleoside 5'-phosphates.. In terms of biological role, bidirectionally degrades single-stranded DNA into large acid-insoluble oligonucleotides, which are then degraded further into small acid-soluble oligonucleotides. This Xanthomonas oryzae pv. oryzae (strain PXO99A) protein is Exodeoxyribonuclease 7 large subunit.